A 228-amino-acid polypeptide reads, in one-letter code: Expansin-B13 (228 aa).

The N-terminal stretch at 1–22 (MASSSLLLASVVVAAMVSAVSC) is a signal peptide. N32 is a glycosylation site (N-linked (GlcNAc...) asparagine). An Expansin-like EG45 domain is found at 61–172 (SGACGYKDVD…KEKGSEEWKA (112 aa)). Disulfide bonds link C64/C92 and C100/C106. An Expansin-like CBD domain is found at 142-223 (GKDEELLKYV…GWKADSVYKS (82 aa)).

This sequence belongs to the expansin family. Expansin B subfamily.

Its subcellular location is the secreted. It is found in the cell wall. It localises to the membrane. Its function is as follows. May cause loosening and extension of plant cell walls by disrupting non-covalent bonding between cellulose microfibrils and matrix glucans. No enzymatic activity has been found. May be required for rapid internodal elongation in deepwater rice during submergence. This is Expansin-B13 (EXPB13) from Oryza sativa subsp. japonica (Rice).